The sequence spans 236 residues: Orotidine 5'-phosphate decarboxylase (236 aa).

Substrate-binding positions include Asp-14, Lys-36, 63–72 (DLKYHDIPNT), Thr-122, Arg-183, Gln-192, Gly-212, and Arg-213. Lys-65 functions as the Proton donor in the catalytic mechanism.

This sequence belongs to the OMP decarboxylase family. Type 1 subfamily. As to quaternary structure, homodimer.

It catalyses the reaction orotidine 5'-phosphate + H(+) = UMP + CO2. Its pathway is pyrimidine metabolism; UMP biosynthesis via de novo pathway; UMP from orotate: step 2/2. Its function is as follows. Catalyzes the decarboxylation of orotidine 5'-monophosphate (OMP) to uridine 5'-monophosphate (UMP). This Halorhodospira halophila (strain DSM 244 / SL1) (Ectothiorhodospira halophila (strain DSM 244 / SL1)) protein is Orotidine 5'-phosphate decarboxylase.